Here is a 159-residue protein sequence, read N- to C-terminus: Short coiled-coil protein (159 aa).

Positions 78 to 146 form a coiled coil; the sequence is MMNADMDAVD…QYIENLMSAS (69 aa).

This sequence belongs to the SCOC family. Homodimer. Interacts with ARL1, ARL2 and ARL3. Directly interacts with FEZ1 and UVRAG. The interaction with UVRAG is reduced by amino acid starvation, but the complex is stabilized in the presence of FEZ1. Interacts with NRBF2. Widely expressed with highest levels in brain, heart and skeletal muscle.

The protein resides in the golgi apparatus membrane. It localises to the golgi apparatus. It is found in the trans-Golgi network. The protein localises to the cytoplasm. Its subcellular location is the cytosol. Positive regulator of amino acid starvation-induced autophagy. This is Short coiled-coil protein (SCOC) from Homo sapiens (Human).